The sequence spans 111 residues: Prophage-derived-like uncharacterized protein YozM (111 aa).

The N-terminal stretch at Met1–Glu24 is a signal peptide.

This chain is Prophage-derived-like uncharacterized protein YozM (yozM), found in Bacillus subtilis (strain 168).